The sequence spans 317 residues: Inositol oxygenase 4 (317 aa).

Substrate-binding positions include arginine 58 and aspartate 115 to serine 117. Histidine 128, histidine 153, and aspartate 154 together coordinate Fe cation. Substrate-binding positions include lysine 157 and glycine 174–aspartate 175. Positions 226, 252, and 285 each coordinate Fe cation. Histidine 252 to serine 253 lines the substrate pocket.

Belongs to the myo-inositol oxygenase family. Fe cation is required as a cofactor. In terms of tissue distribution, expressed in flowers, leaves, siliques, and to a lesser extent in roots.

The protein resides in the cytoplasm. It catalyses the reaction myo-inositol + O2 = D-glucuronate + H2O + H(+). Its pathway is polyol metabolism; myo-inositol degradation into D-glucuronate; D-glucuronate from myo-inositol: step 1/1. Functionally, catalyzes the oxygenative cleavage of myo-inositol to D-glucuronate. Involved in the biosynthesis of UDP-glucuronic acid (UDP-GlcA), providing nucleotide sugars for cell-wall polymers. May be also involved in plant ascorbate biosynthesis. This is Inositol oxygenase 4 (MIOX4) from Arabidopsis thaliana (Mouse-ear cress).